We begin with the raw amino-acid sequence, 89 residues long: Small ribosomal subunit protein uS14A (89 aa).

Positions 29–62 (AAGDRTALAKLPRDSNPNRLRLRDQTDGRPRGYM) are disordered. Positions 49–58 (RLRDQTDGRP) are enriched in basic and acidic residues.

Belongs to the universal ribosomal protein uS14 family. As to quaternary structure, part of the 30S ribosomal subunit. Contacts proteins S3 and S10.

Its function is as follows. Binds 16S rRNA, required for the assembly of 30S particles and may also be responsible for determining the conformation of the 16S rRNA at the A site. The chain is Small ribosomal subunit protein uS14A from Enterococcus faecalis (strain ATCC 700802 / V583).